A 344-amino-acid polypeptide reads, in one-letter code: Protein RecA (344 aa).

64-71 is an ATP binding site; the sequence is GPESSGKT.

This sequence belongs to the RecA family.

Its subcellular location is the cytoplasm. Functionally, can catalyze the hydrolysis of ATP in the presence of single-stranded DNA, the ATP-dependent uptake of single-stranded DNA by duplex DNA, and the ATP-dependent hybridization of homologous single-stranded DNAs. It interacts with LexA causing its activation and leading to its autocatalytic cleavage. The chain is Protein RecA from Paramagnetospirillum magnetotacticum (Aquaspirillum magnetotacticum).